The chain runs to 141 residues: Large ribosomal subunit protein uL11 (141 aa).

It belongs to the universal ribosomal protein uL11 family. As to quaternary structure, part of the ribosomal stalk of the 50S ribosomal subunit. Interacts with L10 and the large rRNA to form the base of the stalk. L10 forms an elongated spine to which L12 dimers bind in a sequential fashion forming a multimeric L10(L12)X complex. In terms of processing, one or more lysine residues are methylated.

Functionally, forms part of the ribosomal stalk which helps the ribosome interact with GTP-bound translation factors. The chain is Large ribosomal subunit protein uL11 from Synechococcus sp. (strain CC9605).